The following is a 97-amino-acid chain: Prophage lipoprotein Bor homolog (97 aa).

Positions 1–16 (MKKMLLATALALLITG) are cleaved as a signal peptide. The N-palmitoyl cysteine moiety is linked to residue C17. C17 carries S-diacylglycerol cysteine lipidation.

Belongs to the lambda phage bor family.

The protein localises to the cell membrane. The chain is Prophage lipoprotein Bor homolog (borD) from Escherichia coli (strain K12).